The following is a 332-amino-acid chain: Methionine synthase (332 aa).

3 residues coordinate Zn(2+): His-211, Cys-213, and Cys-296.

The protein belongs to the archaeal MetE family. The cofactor is Zn(2+).

The protein operates within amino-acid biosynthesis; L-methionine biosynthesis via de novo pathway. Catalyzes the transfer of a methyl group to L-homocysteine resulting in methionine formation. The physiological methyl donor is unknown. The protein is Methionine synthase of Saccharolobus islandicus (strain Y.N.15.51 / Yellowstone #2) (Sulfolobus islandicus).